Here is a 111-residue protein sequence, read N- to C-terminus: MICOS complex subunit MIC13 (111 aa).

Residues 8–26 (VVKFATKVTIAGGALYVAY) traverse the membrane as a helical segment.

The protein belongs to the MICOS complex subunit Mic13 family. In terms of assembly, component of the mitochondrial contact site and cristae organizing system (MICOS) complex.

The protein localises to the mitochondrion inner membrane. Its function is as follows. Component of the MICOS complex, a large protein complex of the mitochondrial inner membrane that plays crucial roles in the maintenance of crista junctions, inner membrane architecture, and formation of contact sites to the outer membrane. Constituent of mature MICOS complex, it is required for the formation of cristae junction (CJ) and maintenance of cristae morphology. Required for the incorporation of MIC10 into the MICOS complex. This chain is MICOS complex subunit MIC13, found in Danio rerio (Zebrafish).